Consider the following 303-residue polypeptide: Methionyl-tRNA formyltransferase (303 aa).

108 to 111 is a binding site for (6S)-5,6,7,8-tetrahydrofolate; sequence SDLP.

This sequence belongs to the Fmt family.

It carries out the reaction L-methionyl-tRNA(fMet) + (6R)-10-formyltetrahydrofolate = N-formyl-L-methionyl-tRNA(fMet) + (6S)-5,6,7,8-tetrahydrofolate + H(+). Its function is as follows. Attaches a formyl group to the free amino group of methionyl-tRNA(fMet). The formyl group appears to play a dual role in the initiator identity of N-formylmethionyl-tRNA by promoting its recognition by IF2 and preventing the misappropriation of this tRNA by the elongation apparatus. The protein is Methionyl-tRNA formyltransferase of Rickettsia typhi (strain ATCC VR-144 / Wilmington).